The following is a 175-amino-acid chain: uncharacterized protein (175 aa).

This is an uncharacterized protein from Acanthamoeba polyphaga mimivirus (APMV).